We begin with the raw amino-acid sequence, 222 residues long: Sororin-like protein (222 aa).

Residues 1-189 (MEAPRSVGGR…VKQEKEDPVS (189 aa)) are disordered. The span at 24–33 (SRSSQQSSSS) shows a compositional bias: low complexity. The span at 47-60 (RLVEQTTLKEKPKD) shows a compositional bias: basic and acidic residues. A compositionally biased stretch (low complexity) spans 88–105 (ADLASPASAPSRPQTSRS). The Nuclear localization signal signature appears at 155 to 162 (GKKTRQAS). Residues 167 to 179 (KTLKVAPKKRQRT) are compositionally biased toward basic residues. Positions 192–214 (CQDYIEKQKAYFAEIDAFELPVE) are C-terminal Sororin domain.

It belongs to the sororin family.

It localises to the nucleus. Functionally, regulator of sister chromatid cohesion in mitosis stabilizing cohesin complex association with chromatin. Antagonizes the action of WAPL proteins (WAPL1 and WAPL2) which stimulates cohesin dissociation from chromatin, particularly during somatic division in root cells and meiocytes during anaphase I. Required for centromeric sister chromatid cohesion during male meiosis (microsporogenesis). Cohesion ensures that chromosome partitioning is accurate in dividing cells and may play an important role in DNA repair. This Arabidopsis thaliana (Mouse-ear cress) protein is Sororin-like protein.